Reading from the N-terminus, the 694-residue chain is Pentatricopeptide repeat-containing protein At3g12770 (694 aa).

PPR repeat units follow at residues 52 to 82 (SGFLITKLIHASSSFGDITFARQVFDDLPRP), 83 to 117 (QIFPWNAIIRGYSRNNHFQDALLMYSNMQLARVSP), 118 to 152 (DSFTFPHLLKACSGLSHLQMGRFVHAQVFRLGFDA), 153 to 183 (DVFVQNGLIALYAKCRRLGSARTVFEGLPLP), 186 to 220 (TIVSWTAIVSAYAQNGEPMEALEIFSQMRKMDVKP), 221 to 255 (DWVALVSVLNAFTCLQDLKQGRSIHASVVKMGLEI), 256 to 286 (EPDLLISLNTMYAKCGQVATAKILFDKMKSP), 287 to 321 (NLILWNAMISGYAKNGYAREAIDMFHEMINKDVRP), 322 to 356 (DTISITSAISACAQVGSLEQARSMYEYVGRSDYRD), 357 to 387 (DVFISSALIDMFAKCGSVEGARLVFDRTLDR), 388 to 422 (DVVVWSAMIVGYGLHGRAREAISLYRAMERGGVHP), 423 to 457 (NDVTFLGLLMACNHSGMVREGWWFFNRMADHKINP), and 458 to 488 (QQQHYACVIDLLGRAGHLDQAYEVIKCMPVQ). Residues 493-568 (VWGALLSACK…DVGCSWVEVR (76 aa)) are type E motif. The tract at residues 569-599 (GRLEAFRVGDKSHPRYEEIERQVEWIESRLK) is type E(+) motif. Residues 600 to 694 (EGGFVANKDA…DGVCSCGDYW (95 aa)) form a type DYW motif region.

It belongs to the PPR family. PCMP-H subfamily.

The protein is Pentatricopeptide repeat-containing protein At3g12770 (PCMP-H43) of Arabidopsis thaliana (Mouse-ear cress).